We begin with the raw amino-acid sequence, 231 residues long: MSKLITTEPLKSMAEVISNYVIQRESFSARNILNKNSLVKKEIRYDLEVPTSADSIWSVYSCPDIPRLLRDVLLPGVFQKLDVIEGNGGVGTVLDIVFPPGAVPRSYKEKFVNINHEKRLKEVIMIEGGYLDMGCTFYMDRIHIFEKTPNSCVIESSIIYEVKEEYAGKMAKLITTEPLESMAEVISGYVLKKRLQVFGFEIKPKLRFNLLLCLIICLVIAGGMFVAGVPL.

107-109 lines the dopamine pocket; the sequence is YKE. Catalysis depends on Lys121, which acts as the Proton donor. Asp140 contributes to the (4-hydroxyphenyl)acetaldehyde binding site. The chain crosses the membrane as a helical span at residues 210 to 230; it reads LLLCLIICLVIAGGMFVAGVP.

It belongs to the BetVI family. As to expression, expressed in roots, stems and leaves. Detected in flower buds and germinating seeds. Low expression in carpels. Restricted to sieve elements of the phloem adjacent or proximal to laticifers.

It localises to the endoplasmic reticulum membrane. The protein localises to the vacuole membrane. The enzyme catalyses (4-hydroxyphenyl)acetaldehyde + dopamine = (S)-norcoclaurine + H2O. It functions in the pathway alkaloid biosynthesis; (S)-reticuline biosynthesis. Activity doubles within 5 hours of elicitor treatment and continues to increase for at least 80 hours. Involved in the biosynthesis of (S)-coclaurine, the common precursor of all benzylisoquinoline alkaloids such as morphine, sanguinarine, codeine or papaverine. Condenses dopamine and 4-hydroxyphenylacetaldehyde. The protein is S-norcoclaurine synthase 2 of Papaver somniferum (Opium poppy).